The following is a 403-amino-acid chain: Synaptotagmin-7 (403 aa).

The Vesicular portion of the chain corresponds to 1–16 (MYRDPEAASPGAPSRD). Residues 17–37 (VLLVSAIITVSLSVTVVLCGL) form a helical membrane-spanning segment. Over 38 to 403 (CHWCQRKLGK…PVAQWHQLKA (366 aa)) the chain is Cytoplasmic. Residue S52 is modified to Phosphoserine. The tract at residues 53–106 (LETVGTPDSGRGRSEKKAIKLPAGGKAVNTAPVPGQTPHDESDRRTEPRSSVSD) is disordered. The residue at position 58 (T58) is a Phosphothreonine. A Phosphoserine modification is found at S61. Residues 90–100 (PHDESDRRTEP) are compositionally biased toward basic and acidic residues. Residues S119 and S122 each carry the phosphoserine modification. 2 C2 domains span residues 135–255 (NLGR…TFWK) and 266–399 (SRGE…AQWH). Positions 166, 172, 225, 227, 230, 233, 297, 303, 357, 359, 362, and 365 each coordinate Ca(2+).

Belongs to the synaptotagmin family. As to quaternary structure, homodimer. Can also form heterodimers with SYT6, SYT9 and SYT10. Interacts with calmodulin (CALM1, CALM2 or CALM3). Interacts with CD63; required for localization to lysosomes. Interacts with APP. Requires Ca(2+) as cofactor. Post-translationally, palmitoylated at its vesicular N-terminus; palmitoylation is required for localization to lysosome and phagocytosis in macrophages. Expressed in a variety of adult and fetal tissues.

The protein resides in the cell membrane. It is found in the presynaptic cell membrane. The protein localises to the cytoplasmic vesicle. Its subcellular location is the secretory vesicle. It localises to the synaptic vesicle membrane. The protein resides in the lysosome membrane. It is found in the phagosome membrane. The protein localises to the peroxisome membrane. Its subcellular location is the secretory vesicle membrane. In terms of biological role, ca(2+) sensor involved in Ca(2+)-dependent exocytosis of secretory and synaptic vesicles through Ca(2+) and phospholipid binding to the C2 domain. Ca(2+) induces binding of the C2-domains to phospholipid membranes and to assembled SNARE-complexes; both actions contribute to triggering exocytosis. SYT7 binds Ca(2+) with high affinity and slow kinetics compared to other synaptotagmins. Involved in Ca(2+)-triggered lysosomal exocytosis, a major component of the plasma membrane repair. Ca(2+)-regulated delivery of lysosomal membranes to the cell surface is also involved in the phagocytic uptake of particles by macrophages. Ca(2+)-triggered lysosomal exocytosis also plays a role in bone remodeling by regulating secretory pathways in osteoclasts and osteoblasts. In case of infection, involved in participates cell invasion by Trypanosoma cruzi via Ca(2+)-triggered lysosomal exocytosis. Involved in cholesterol transport from lysosome to peroxisome by promoting membrane contacts between lysosomes and peroxisomes: probably acts by promoting vesicle fusion by binding phosphatidylinositol-4,5-bisphosphate on peroxisomal membranes. Acts as a key mediator of synaptic facilitation, a process also named short-term synaptic potentiation: synaptic facilitation takes place at synapses with a low initial release probability and is caused by influx of Ca(2+) into the axon terminal after spike generation, increasing the release probability of neurotransmitters. Probably mediates synaptic facilitation by directly increasing the probability of release. May also contribute to synaptic facilitation by regulating synaptic vesicle replenishment, a process required to ensure that synaptic vesicles are ready for the arrival of the next action potential: SYT7 is required for synaptic vesicle replenishment by acting as a sensor for Ca(2+) and by forming a complex with calmodulin. Also acts as a regulator of Ca(2+)-dependent insulin and glucagon secretion in beta-cells. Triggers exocytosis by promoting fusion pore opening and fusion pore expansion in chromaffin cells. Also regulates the secretion of some non-synaptic secretory granules of specialized cells. The polypeptide is Synaptotagmin-7 (Homo sapiens (Human)).